The sequence spans 93 residues: Large ribosomal subunit protein bL27 (93 aa).

The propeptide occupies 1-9; that stretch reads MIKINLQLF.

The protein belongs to the bacterial ribosomal protein bL27 family. In terms of processing, the N-terminus is cleaved by ribosomal processing cysteine protease Prp.

This chain is Large ribosomal subunit protein bL27, found in Ruminiclostridium cellulolyticum (strain ATCC 35319 / DSM 5812 / JCM 6584 / H10) (Clostridium cellulolyticum).